Consider the following 404-residue polypeptide: Glycosyltransferase GlyB (404 aa).

The interval 1–267 (MNTKSIVFNA…ILLRKDIISR (267 aa)) is GT8 domain. Residues 9 to 14 (NADNDY) and 103 to 104 (DS) contribute to the UDP site. Mn(2+) is bound by residues Asp-103, Asp-105, and His-228. Position 228 to 233 (228 to 233 (HYTGVK)) interacts with UDP.

It in the N-terminal section; belongs to the glycosyltransferase 8 family.

In terms of biological role, may be involved in the polymorphic O-glycosylation of the serine-rich repeat protein PsrP. Has equal hydrolytic activity against both UDP-galactose and UDP-glucose; no glycosyltransferase activity has been seen with tested substrates. This chain is Glycosyltransferase GlyB, found in Streptococcus pneumoniae serotype 4 (strain ATCC BAA-334 / TIGR4).